A 485-amino-acid chain; its full sequence is Pentatricopeptide repeat-containing protein At1g62720 (485 aa).

PPR repeat units follow at residues 68-102 (SIVDFSKVLSKIAKSKNYDLVISLFHHMEVCGIGH), 103-137 (DLYSYNIVINCLCRCSRFVIALSVVGKMMKFGYEP), 138-172 (DVVTVSSLINGFCQGNRVFDAIDLVSKMEEMGFRP), 173-207 (DVVIYNTIIDGSCKIGLVNDAVELFDRMERDGVRA), 208-242 (DAVTYNSLVAGLCCSGRWSDAARLMRDMVMRDIVP), 243-277 (NVITFTAVIDVFVKEGKFSEAMKLYEEMTRRCVDP), 278-312 (DVFTYNSLINGLCMHGRVDEAKQMLDLMVTKGCLP), 313-347 (DVVTYNTLINGFCKSKRVDEGTKLFREMAQRGLVG), 348-378 (DTITYNTIIQGYFQAGRPDAAQEIFSRMDSR), 380-414 (NIRTYSILLYGLCMNWRVEKALVLFENMQKSEIEL), 415-449 (DITTYNIVIHGMCKIGNVEDAWDLFRSLSCKGLKP), and 450-484 (DVVSYTTMISGFCRKRQWDKSDLLYRKMQEDGLLP).

The protein belongs to the PPR family. P subfamily.

In Arabidopsis thaliana (Mouse-ear cress), this protein is Pentatricopeptide repeat-containing protein At1g62720.